Reading from the N-terminus, the 337-residue chain is Glyceraldehyde-3-phosphate dehydrogenase 1 (337 aa).

NAD(+) is bound by residues R11–I12, D33, and R78. D-glyceraldehyde 3-phosphate contacts are provided by residues S149–T151, T180, T209–G210, and R232. C150 acts as the Nucleophile in catalysis. Position 318 (N318) interacts with NAD(+).

Belongs to the glyceraldehyde-3-phosphate dehydrogenase family. As to quaternary structure, homotetramer.

It is found in the cytoplasm. It catalyses the reaction D-glyceraldehyde 3-phosphate + phosphate + NAD(+) = (2R)-3-phospho-glyceroyl phosphate + NADH + H(+). It functions in the pathway carbohydrate degradation; glycolysis; pyruvate from D-glyceraldehyde 3-phosphate: step 1/5. The sequence is that of Glyceraldehyde-3-phosphate dehydrogenase 1 (gpd1) from Agaricus bisporus (White button mushroom).